We begin with the raw amino-acid sequence, 130 residues long: Ribonuclease VapC46 (130 aa).

The PINc domain maps to 4-118 (IYLDSSAIVK…CTYDDRMRDA (115 aa)). Mg(2+) is bound by residues aspartate 7 and aspartate 91.

It belongs to the PINc/VapC protein family. It depends on Mg(2+) as a cofactor.

In terms of biological role, toxic component of a type II toxin-antitoxin (TA) system. An RNase. Upon expression in M.smegmatis inhibits colony formation. Its toxic effect is neutralized by coexpression with cognate antitoxin VapB46. In Mycobacterium tuberculosis (strain ATCC 25618 / H37Rv), this protein is Ribonuclease VapC46.